The sequence spans 265 residues: MPIWSPKGRAAAGVVASVLFIVFFFLPLAVILMSSLSQQWNGILPSGFTLNHFVNALHGAAWDALLASLTIGFCASLFALLCGVWAALALRQYGVKTQKWLSMVFYLPSAIPSVSVGLGILVAFSQGPLQMNGTLWIVLTAHFVLISAFTFSNVSTGLARISADIENVASSLGASPWYRLRHVTLPLLMPWMMSALALSLSLSMGELGATMMIYPPGWTTLPVAIFSLTDRGNIADGAALTIVLVAITLLLMMKLERIAKWLGQK.

6 helical membrane-spanning segments follow: residues 13 to 33 (GVVA…VILM), 69 to 89 (LTIG…AALA), 104 to 124 (VFYL…LVAF), 131 to 151 (MNGT…AFTF), 185 to 205 (LPLL…LSMG), and 233 to 253 (NIAD…LLMM). Residues 65–253 (LLASLTIGFC…LVAITLLLMM (189 aa)) form the ABC transmembrane type-1 domain.

The protein belongs to the binding-protein-dependent transport system permease family.

The protein localises to the cell inner membrane. Its function is as follows. Probably part of the PhnSTUV complex (TC 3.A.1.11.5) involved in 2-aminoethylphosphonate import. Probably responsible for the translocation of the substrate across the membrane. The sequence is that of Putative 2-aminoethylphosphonate transport system permease protein PhnV (phnV) from Salmonella choleraesuis (strain SC-B67).